Here is a 404-residue protein sequence, read N- to C-terminus: WD repeat and SOCS box-containing protein 2 (404 aa).

7 WD repeats span residues 16–55 (GRPH…LIPW), 81–140 (GSPK…IWEV), 144–183 (LLLL…IWDL), 188–226 (KQIQ…LWSM), 230–268 (TLIR…MWDP), 283–322 (DPAM…IWAL), and 325–362 (KTPI…FWTA). The disordered stretch occupies residues 68 to 87 (AKSRSSKNETKGRGSPKEKT). The 49-residue stretch at 356-404 (HVQFWTAPRVLSSLKHLCRKALRSFLTTYQVLALPIPKKMKEFLTYRTF) folds into the SOCS box domain.

It functions in the pathway protein modification; protein ubiquitination. May be a substrate-recognition component of a SCF-like ECS (Elongin-Cullin-SOCS-box protein) E3 ubiquitin ligase complex which mediates the ubiquitination and subsequent proteasomal degradation of target proteins. The protein is WD repeat and SOCS box-containing protein 2 (WSB2) of Homo sapiens (Human).